The following is a 292-amino-acid chain: Imipenem-hydrolyzing beta-lactamase (292 aa).

A signal peptide spans 1-27 (MSLNVKQSRIAILFSSCLISISFFSQA). The cysteines at positions 70 and 240 are disulfide-linked. Catalysis depends on serine 71, which acts as the Acyl-ester intermediate. Residue 236 to 238 (KTG) coordinates substrate.

The protein belongs to the class-A beta-lactamase family.

The catalysed reaction is a beta-lactam + H2O = a substituted beta-amino acid. Its function is as follows. Hydrolyzes carbapenems such as imipenem, which are extended-spectrum beta-lactam antibiotics. The protein is Imipenem-hydrolyzing beta-lactamase (nmcA) of Enterobacter cloacae.